The sequence spans 168 residues: uncharacterized protein (168 aa).

Disordered regions lie at residues 37–74 (GGSK…SQFT), 81–100 (QYNY…PNYY), and 117–168 (MQPF…EETN). 2 stretches are compositionally biased toward polar residues: residues 52-74 (HSGQ…SQFT) and 82-95 (YNYN…TRSV). The segment covering 120-129 (FNNQSFNNQS) has biased composition (low complexity). Polar residues predominate over residues 130 to 158 (RTHQSKTYQHNQQKRSFNGPRNNGPQNNV).

This is an uncharacterized protein from Acanthamoeba polyphaga (Amoeba).